The primary structure comprises 359 residues: DNA-directed RNA polymerase subunit alpha (359 aa).

The tract at residues Met1 to Asn226 is alpha N-terminal domain (alpha-NTD). The tract at residues Ala241 to Leu359 is alpha C-terminal domain (alpha-CTD). Positions Phe315–Leu359 are disordered. The span at Asn345–Leu359 shows a compositional bias: acidic residues.

It belongs to the RNA polymerase alpha chain family. In terms of assembly, homodimer. The RNAP catalytic core consists of 2 alpha, 1 beta, 1 beta' and 1 omega subunit. When a sigma factor is associated with the core the holoenzyme is formed, which can initiate transcription.

It catalyses the reaction RNA(n) + a ribonucleoside 5'-triphosphate = RNA(n+1) + diphosphate. Functionally, DNA-dependent RNA polymerase catalyzes the transcription of DNA into RNA using the four ribonucleoside triphosphates as substrates. In Saccharopolyspora erythraea (strain ATCC 11635 / DSM 40517 / JCM 4748 / NBRC 13426 / NCIMB 8594 / NRRL 2338), this protein is DNA-directed RNA polymerase subunit alpha.